Consider the following 474-residue polypeptide: NAD(P) transhydrogenase subunit beta (474 aa).

9 helical membrane-spanning segments follow: residues 4 to 24 (GLVQ…LAGL), 46 to 66 (IATI…AMII), 83 to 103 (MPEL…LVGF), 132 to 152 (VLTN…AVTF), 181 to 200 (LAAL…NPES), 202 to 222 (FPVL…VASI), 229 to 249 (VVVS…GFIL), 253 to 273 (LLIV…YIMC), and 321 to 341 (VIIT…VADI).

This sequence belongs to the PNT beta subunit family. In terms of assembly, heterodimer of an alpha and a beta chain.

The protein resides in the cell inner membrane. It carries out the reaction NAD(+) + NADPH + H(+)(in) = NADH + NADP(+) + H(+)(out). Its function is as follows. The transhydrogenation between NADH and NADP is coupled to respiration and ATP hydrolysis and functions as a proton pump across the membrane. The sequence is that of NAD(P) transhydrogenase subunit beta (pntB) from Haemophilus influenzae (strain ATCC 51907 / DSM 11121 / KW20 / Rd).